We begin with the raw amino-acid sequence, 295 residues long: Trimeric intracellular cation channel type 1B.1 (295 aa).

The Lumenal segment spans residues 1–27 (MVVPESFQLDQEILLDAGAQLHRLKMY). Residues 28–45 (PYFDVAHYLLMIIEVRDD) form a helical membrane-spanning segment. Over 46–56 (LGSAASIFSRK) the chain is Cytoplasmic. Residues 57 to 80 (HPLSCWLSSMLMCFADAFLANFLL) traverse the membrane as a discontinuously helical segment. The Lumenal segment spans residues 81–89 (GEPVIAPFK). A helical membrane pass occupies residues 90 to 107 (RHDDIILATIIWYLVFYA). Residues 108 to 119 (PFDGIYKIAKIT) lie on the Cytoplasmic side of the membrane. The chain crosses the membrane as a helical span at residues 120–148 (PVKCVLAVMKEVKRAYKVSHGVSHAAKLY). A 1,2-diacyl-sn-glycero-3-phospho-(1D-myo-inositol-4,5-bisphosphate) is bound by residues K129 and R133. The Lumenal segment spans residues 149–150 (PN). Residues 151 to 177 (SYIVQVLVGTAKGAGSGIVRTLEQLVR) traverse the membrane as a discontinuously helical segment. S166 serves as a coordination point for a 1,2-diacyl-sn-glycero-3-phospho-(1D-myo-inositol-4,5-bisphosphate). The Cytoplasmic portion of the chain corresponds to 178-188 (GVWLPTHNELL). A helical membrane pass occupies residues 189–210 (RPSFATKACVVAASVLALEKSG). The Lumenal portion of the chain corresponds to 211 to 215 (TYLTA). Residues 216 to 239 (PHDLVYLVIVGFFVYFKLSAVILH) traverse the membrane as a helical segment. The Cytoplasmic portion of the chain corresponds to 240 to 295 (VTDPFAPIENLFCAIFMGGIWDAVSRALAASRDRRAAGAHSNENGSSISTPEKKDQ). The disordered stretch occupies residues 274–295 (RAAGAHSNENGSSISTPEKKDQ).

The protein belongs to the TMEM38 family. As to quaternary structure, homotrimer; trimerization probably requires binding to phosphatidylinositol 4,5-bisphosphate (PIP2).

The protein resides in the endoplasmic reticulum membrane. Its function is as follows. Potassium channel that mediates transmembrane potassium transport. Might be required for maintenance of rapid intracellular calcium release. May act as a counter-ion channel that functions in synchronization with calcium release from intracellular stores. Binds phosphatidylinositol 4,5-bisphosphate (PIP2). This is Trimeric intracellular cation channel type 1B.1 from Caenorhabditis elegans.